Here is a 118-residue protein sequence, read N- to C-terminus: UPF0134 protein MPN_287 (118 aa).

The protein belongs to the UPF0134 family.

The polypeptide is UPF0134 protein MPN_287 (Mycoplasma pneumoniae (strain ATCC 29342 / M129 / Subtype 1) (Mycoplasmoides pneumoniae)).